Reading from the N-terminus, the 98-residue chain is Integration host factor subunit alpha (98 aa).

The segment at 49-70 (FGNFDLRDKNQRPGRNPKTGED) is disordered.

Belongs to the bacterial histone-like protein family. Heterodimer of an alpha and a beta chain.

Its function is as follows. This protein is one of the two subunits of integration host factor, a specific DNA-binding protein that functions in genetic recombination as well as in transcriptional and translational control. This is Integration host factor subunit alpha from Yersinia pestis.